Reading from the N-terminus, the 601-residue chain is Elongation factor 4 (601 aa).

The tr-type G domain maps to 6-188; sequence SRTRNFSIIA…DIVKNVPPPK (183 aa). GTP contacts are provided by residues 18–23 and 135–138; these read DHGKST and NKID.

Belongs to the TRAFAC class translation factor GTPase superfamily. Classic translation factor GTPase family. LepA subfamily.

It is found in the cell membrane. The catalysed reaction is GTP + H2O = GDP + phosphate + H(+). Required for accurate and efficient protein synthesis under certain stress conditions. May act as a fidelity factor of the translation reaction, by catalyzing a one-codon backward translocation of tRNAs on improperly translocated ribosomes. Back-translocation proceeds from a post-translocation (POST) complex to a pre-translocation (PRE) complex, thus giving elongation factor G a second chance to translocate the tRNAs correctly. Binds to ribosomes in a GTP-dependent manner. This Clostridioides difficile (strain 630) (Peptoclostridium difficile) protein is Elongation factor 4.